Here is a 30-residue protein sequence, read N- to C-terminus: Superoxide dismutase [Cu-Zn] 1 (30 aa).

This sequence belongs to the Cu-Zn superoxide dismutase family. Cu cation is required as a cofactor. Requires Zn(2+) as cofactor. In terms of tissue distribution, expressed in fruits, leaves and pollen grains.

It is found in the cytoplasm. The protein resides in the endoplasmic reticulum. The catalysed reaction is 2 superoxide + 2 H(+) = H2O2 + O2. Inhibited by KCN and H(2)O(2). Destroys radicals which are normally produced within the cells and which are toxic to biological systems. Probably involved in the protection against oxidative stress during pollen development. The chain is Superoxide dismutase [Cu-Zn] 1 from Olea europaea (Common olive).